A 245-amino-acid chain; its full sequence is Complement C1q subcomponent subunit A (245 aa).

The N-terminal stretch at 1-22 (METSQGWLVACVLTMTLVWTVA) is a signal peptide. Residues 28-114 (APNGKDGAPG…NPGNIRDQPR (87 aa)) are disordered. In terms of domain architecture, Collagen-like spans 31–109 (GKDGAPGNPG…KGVKGNPGNI (79 aa)). 4-hydroxyproline is present on residues Pro39 and Pro45. Lys48 carries the post-translational modification 5-hydroxylysine. Lys48 is a glycosylation site (O-linked (Gal...) hydroxylysine; alternate). Position 54 is a 4-hydroxyproline (Pro54). The residue at position 67 (Lys67) is a 5-hydroxylysine. Residue Lys67 is glycosylated (O-linked (Gal...) hydroxylysine; alternate). A 4-hydroxyproline mark is found at Pro79 and Pro85. Residues 79-99 (PGNVGLPGPSGPLGDSGPQGL) show a composition bias toward low complexity. A 5-hydroxylysine modification is found at Lys100. Lys100 carries O-linked (Gal...) hydroxylysine; alternate glycosylation. The C1q domain occupies 110–245 (RDQPRPAFSA…FSGFLIFPSA (136 aa)). N-linked (GlcNAc...) asparagine glycosylation is present at Asn146. A Ca(2+)-binding site is contributed by Gln199.

Core component of the complement C1 complex, a calcium-dependent complex composed of 1 molecule of the C1Q subcomplex, 2 molecules of C1R and 2 molecules of C1S. The C1Q subcomplex is composed 18 subunits: 3 chains of C1QA, C1QB, and C1QC trimerize to form 6 collagen-like triple helices connected to six globular ligand-recognition modules (C1q domain). Interacts with CR1 (via Sushi 24 and Sushi 25 domains). Interacts (via C-terminus) with CD33; this interaction activates CD33 inhibitory motifs. In terms of processing, O-linked glycans are assumed to be the Glc-Gal disaccharides typically found as secondary modifications of hydroxylated lysines in collagen-like domains.

The protein resides in the secreted. It localises to the cell surface. The C1Q subcomplex is inhibited by sulfated molecules, such as triterpenoid sulfates, heparan sulfate, or chondroitin sulfates. Its function is as follows. Core component of the complement C1 complex, a multiprotein complex that initiates the classical pathway of the complement system, a cascade of proteins that leads to phagocytosis and breakdown of pathogens and signaling that strengthens the adaptive immune system. The classical complement pathway is initiated by the C1Q subcomplex of the C1 complex, which specifically binds IgG or IgM immunoglobulins complexed with antigens, forming antigen-antibody complexes on the surface of pathogens: C1QA, together with C1QB and C1QC, specifically recognizes and binds the Fc regions of IgG or IgM via its C1q domain. Immunoglobulin-binding activates the proenzyme C1R, which cleaves C1S, initiating the proteolytic cascade of the complement system. The C1Q subcomplex is activated by a hexamer of IgG complexed with antigens, while it is activated by a pentameric IgM. The C1Q subcomplex also recognizes and binds phosphatidylserine exposed on the surface of cells undergoing programmed cell death, possibly promoting activation of the complement system. In Mus musculus (Mouse), this protein is Complement C1q subcomponent subunit A.